Reading from the N-terminus, the 172-residue chain is MPRSQINGNFIDKTSSIVANILLRIIPTTSGEKKAFTYYRDGAIMSAQSEGNYAEALQNYYEATRSEIDPYDRSYILYNIGLIHTSNGEHTKALEYYFQAIERNPFLPQAFNNMAVICHYQGERAILRGDSEIAEAWFDQAAEYWKQAIGLTPGNYIEAHNWLKITRRLEFE.

3 TPR repeats span residues 35–70 (AFTYYRDGAIMSAQSEGNYAEALQNYYEATRSEIDP), 74–107 (SYILYNIGLIHTSNGEHTKALEYYFQAIERNPFL), and 122–155 (GERAILRGDSEIAEAWFDQAAEYWKQAIGLTPGN).

The protein belongs to the Ycf3 family.

It localises to the plastid. The protein localises to the chloroplast thylakoid membrane. Essential for the assembly of the photosystem I (PSI) complex. May act as a chaperone-like factor to guide the assembly of the PSI subunits. This is Photosystem I assembly protein Ycf3 from Dioscorea elephantipes (Elephant's foot yam).